The primary structure comprises 358 residues: Aerobic magnesium-protoporphyrin IX monomethyl ester [oxidative] cyclase (358 aa).

It belongs to the AcsF family. Fe cation is required as a cofactor.

The catalysed reaction is Mg-protoporphyrin IX 13-monomethyl ester + 3 NADPH + 3 O2 + 2 H(+) = 3,8-divinyl protochlorophyllide a + 3 NADP(+) + 5 H2O. Its pathway is porphyrin-containing compound metabolism; chlorophyll biosynthesis. Functionally, catalyzes the formation of the isocyclic ring in chlorophyll biosynthesis in aerobic conditions. Mediates the cyclase reaction, which results in the formation of divinylprotochlorophyllide (Pchlide) characteristic of all chlorophylls from magnesium-protoporphyrin IX 13-monomethyl ester (MgPMME). The chain is Aerobic magnesium-protoporphyrin IX monomethyl ester [oxidative] cyclase from Rubrivivax gelatinosus (Rhodocyclus gelatinosus).